Consider the following 207-residue polypeptide: Holliday junction branch migration complex subunit RuvA (207 aa).

Residues 1-65 (MIGRIRGVIL…EDAQLLYGFN (65 aa)) are domain I. A domain II region spans residues 66–143 (QKQERALFRE…KGLNGDLFEQ (78 aa)). Positions 144–158 (NGDIELPASASSKAP) are flexible linker. Residues 159 to 207 (SAADIEAEASAALIALGYKPQEAAKMISRVATAGADSETLIKEALRAAI) form a domain III region.

This sequence belongs to the RuvA family. As to quaternary structure, homotetramer. Forms an RuvA(8)-RuvB(12)-Holliday junction (HJ) complex. HJ DNA is sandwiched between 2 RuvA tetramers; dsDNA enters through RuvA and exits via RuvB. An RuvB hexamer assembles on each DNA strand where it exits the tetramer. Each RuvB hexamer is contacted by two RuvA subunits (via domain III) on 2 adjacent RuvB subunits; this complex drives branch migration. In the full resolvosome a probable DNA-RuvA(4)-RuvB(12)-RuvC(2) complex forms which resolves the HJ.

The protein resides in the cytoplasm. In terms of biological role, the RuvA-RuvB-RuvC complex processes Holliday junction (HJ) DNA during genetic recombination and DNA repair, while the RuvA-RuvB complex plays an important role in the rescue of blocked DNA replication forks via replication fork reversal (RFR). RuvA specifically binds to HJ cruciform DNA, conferring on it an open structure. The RuvB hexamer acts as an ATP-dependent pump, pulling dsDNA into and through the RuvAB complex. HJ branch migration allows RuvC to scan DNA until it finds its consensus sequence, where it cleaves and resolves the cruciform DNA. The protein is Holliday junction branch migration complex subunit RuvA of Proteus mirabilis (strain HI4320).